The sequence spans 431 residues: Enolase (431 aa).

Position 163 (Gln-163) interacts with (2R)-2-phosphoglycerate. Residue Glu-205 is the Proton donor of the active site. Mg(2+) contacts are provided by Asp-242, Glu-283, and Asp-310. (2R)-2-phosphoglycerate-binding residues include Lys-335, Arg-364, Ser-365, and Lys-386. Lys-335 serves as the catalytic Proton acceptor.

Belongs to the enolase family. It depends on Mg(2+) as a cofactor.

Its subcellular location is the cytoplasm. It localises to the secreted. It is found in the cell surface. The enzyme catalyses (2R)-2-phosphoglycerate = phosphoenolpyruvate + H2O. It functions in the pathway carbohydrate degradation; glycolysis; pyruvate from D-glyceraldehyde 3-phosphate: step 4/5. Functionally, catalyzes the reversible conversion of 2-phosphoglycerate (2-PG) into phosphoenolpyruvate (PEP). It is essential for the degradation of carbohydrates via glycolysis. This chain is Enolase, found in Kineococcus radiotolerans (strain ATCC BAA-149 / DSM 14245 / SRS30216).